The chain runs to 396 residues: uncharacterized protein (396 aa).

2 consecutive transmembrane segments (helical) span residues 27 to 47 (LLIA…QICL) and 69 to 89 (FIVL…NVTF). The HXXXXD motif motif lies at 117–122 (HQMYAD). Helical transmembrane passes span 123–143 (WIYL…YIIL) and 372–392 (LTPR…VFVM).

Belongs to the 1-acyl-sn-glycerol-3-phosphate acyltransferase family.

It is found in the membrane. This is an uncharacterized protein from Saccharomyces cerevisiae (strain ATCC 204508 / S288c) (Baker's yeast).